A 157-amino-acid chain; its full sequence is Cyclic pyranopterin monophosphate synthase (157 aa).

Residues 74–76 (MCH) and 110–111 (ME) each bind substrate. Residue D125 is part of the active site.

The protein belongs to the MoaC family. In terms of assembly, homohexamer; trimer of dimers.

The catalysed reaction is (8S)-3',8-cyclo-7,8-dihydroguanosine 5'-triphosphate = cyclic pyranopterin phosphate + diphosphate. Its pathway is cofactor biosynthesis; molybdopterin biosynthesis. Its function is as follows. Catalyzes the conversion of (8S)-3',8-cyclo-7,8-dihydroguanosine 5'-triphosphate to cyclic pyranopterin monophosphate (cPMP). The sequence is that of Cyclic pyranopterin monophosphate synthase from Peptoclostridium acidaminophilum (Eubacterium acidaminophilum).